A 224-amino-acid chain; its full sequence is Peroxiredoxin-6 (224 aa).

One can recognise a Thioredoxin domain in the interval 4-168 (LLLGDEAPNF…ILRVVDSLQL (165 aa)). The required and sufficient for targeting to lysosomes and lamellar bodies stretch occupies residues 30-39 (DSWGILFSHP). C46 (cysteine sulfenic acid (-SOH) intermediate; for peroxidase activity) is an active-site residue. Y88 carries the post-translational modification Phosphotyrosine. The active-site For phospholipase activity is the D139. T176 carries the phosphothreonine; by MAPK modification.

This sequence belongs to the peroxiredoxin family. Prx6 subfamily. As to quaternary structure, homodimer. Interacts with GSTP1; mediates PRDX6 glutathionylation and regeneration. Irreversibly inactivated by overoxidation of Cys-46 to sulfinic acid (Cys-SO(2)H) and sulfonic acid (Cys-SO(3)H) forms upon oxidative stress. In terms of processing, phosphorylation at Thr-176 by MAP kinases increases the phospholipase activity of the enzyme. The phosphorylated form exhibits a greater lysophosphatidylcholine acyltransferase activity compared to the non-phosphorylated form.

The protein localises to the cytoplasm. It localises to the lysosome. It catalyses the reaction a hydroperoxide + 2 glutathione = an alcohol + glutathione disulfide + H2O. It carries out the reaction a 1,2-diacyl-sn-glycero-3-phosphocholine + H2O = a 1-acyl-sn-glycero-3-phosphocholine + a fatty acid + H(+). The catalysed reaction is a 1-acyl-sn-glycero-3-phosphocholine + an acyl-CoA = a 1,2-diacyl-sn-glycero-3-phosphocholine + CoA. The enzyme catalyses 1-hexadecanoyl-sn-glycero-3-phosphocholine + hexadecanoyl-CoA = 1,2-dihexadecanoyl-sn-glycero-3-phosphocholine + CoA. It catalyses the reaction 1,2-dihexadecanoyl-sn-glycero-3-phosphocholine + H2O = 1-hexadecanoyl-sn-glycero-3-phosphocholine + hexadecanoate + H(+). Its function is as follows. Thiol-specific peroxidase that catalyzes the reduction of hydrogen peroxide and organic hydroperoxides to water and alcohols, respectively. Can reduce H(2)O(2) and short chain organic, fatty acid, and phospholipid hydroperoxides. Also has phospholipase activity, and can therefore either reduce the oxidized sn-2 fatty acyl group of phospholipids (peroxidase activity) or hydrolyze the sn-2 ester bond of phospholipids (phospholipase activity). These activities are dependent on binding to phospholipids at acidic pH and to oxidized phospholipds at cytosolic pH. Plays a role in cell protection against oxidative stress by detoxifying peroxides and in phospholipid homeostasis. Exhibits acyl-CoA-dependent lysophospholipid acyltransferase which mediates the conversion of lysophosphatidylcholine (1-acyl-sn-glycero-3-phosphocholine or LPC) into phosphatidylcholine (1,2-diacyl-sn-glycero-3-phosphocholine or PC). Shows a clear preference for LPC as the lysophospholipid and for palmitoyl CoA as the fatty acyl substrate. The polypeptide is Peroxiredoxin-6 (PRDX6) (Gallus gallus (Chicken)).